The sequence spans 444 residues: Citrate-proton symporter (444 aa).

The Cytoplasmic portion of the chain corresponds to 1-41; the sequence is MPTARCSMRASSTAPVRMMATAGGARIGAILRVTSGNFLEQ. Residues 42 to 62 form a helical membrane-spanning segment; the sequence is FDFFLFGFYATYIAHTFFPAS. At 63-72 the chain is on the periplasmic side; the sequence is SEFASLMMTF. Residues 73–93 form a helical membrane-spanning segment; sequence AVFGAGFLMRPIGAIVLGAYI. Residues 94–114 lie on the Cytoplasmic side of the membrane; the sequence is DKVGRRKGLIVTLSIMATGTF. Residues 115 to 135 traverse the membrane as a helical segment; sequence LIVLIPSYQTIGLWAPLLVLI. Residues 136–137 are Periplasmic-facing; the sequence is GR. The chain crosses the membrane as a helical span at residues 138–158; that stretch reads LLQGFSAGAELGGVSVYLAEI. The Cytoplasmic portion of the chain corresponds to 159–177; the sequence is ATPGRKGFYTSWQSGSQQV. The chain crosses the membrane as a helical span at residues 178–198; that stretch reads AIMVAAAMGFALNAVLEPSAI. Residue Ser199 is a topological domain, periplasmic. Residues 200-220 traverse the membrane as a helical segment; sequence DWGWRIPFLFGVLIVPFIFIL. The Cytoplasmic segment spans residues 221–251; that stretch reads RRKLEETQEFTARRHHLAMRQVFATLLANWQ. The helical transmembrane segment at 252–272 threads the bilayer; the sequence is VVIAGMMMVAMTTTAFYLITV. Residues 273–289 are Periplasmic-facing; that stretch reads YAPTFGKKVLMLSASDS. A helical membrane pass occupies residues 290 to 310; the sequence is LLVTLLVAISNFFWLPVGGAL. Residues 311–318 are Cytoplasmic-facing; it reads SDRFGRRS. A helical transmembrane segment spans residues 319-339; sequence VLIAMTLLALATAWPALTMLA. A topological domain (periplasmic) is located at residue Asn340. The chain crosses the membrane as a helical span at residues 341-361; it reads APSFLMMLSVLLWLSFIYGMY. Topologically, residues 362–379 are cytoplasmic; that stretch reads NGAMIPALTEIMPAEVRV. A helical membrane pass occupies residues 380-400; the sequence is AGFSLAYSLATAVFGGFTPVI. Over 401–411 the chain is Periplasmic; that stretch reads STALIEYTGDK. A helical transmembrane segment spans residues 412-432; the sequence is ASPGYWMSFAAICGLLATCYL. The Cytoplasmic portion of the chain corresponds to 433–444; the sequence is YRRSAVALQTAR.

This sequence belongs to the major facilitator superfamily. Metabolite:H+ Symporter (MHS) family (TC 2.A.1.6) family.

It localises to the cell inner membrane. Uptake of citrate across the boundary membrane with the concomitant transport of protons into the cell (symport system). The chain is Citrate-proton symporter (citH) from Klebsiella pneumoniae.